The sequence spans 145 residues: UPF0179 protein MmarC6_0993 (145 aa).

It belongs to the UPF0179 family.

In Methanococcus maripaludis (strain C6 / ATCC BAA-1332), this protein is UPF0179 protein MmarC6_0993.